The sequence spans 437 residues: MFKEKKAPLVCKFGGTSVGTSSSIQRVCEIIRKEKPSFVVVSAVAGVTDLLEEFCRAPVGQKSQFTAMIREKHESIAKELGIDVAIEPFLGPLKQFEGAGHLQQEDQAKILAIGEDLSASLICSYCRANSLQLEQLEARQVILTDSQFLRAEPDLALMQTMWGELVLKENTIYLMQGFLGATASGATTVLGRGGSDFSASLVGELCEARELRIYTDVRGVHTADPKILKDTQLIDFLTFEEMQELASSGSKVLHQDMLKPCIRAKVPIFVTSTFDLTKEGTWICASLNEGVEGPEIKALSLKANQALWFVEYHSPLMRLENVLRCVRGLGSIPGVVMAQNSGVYFTVDWEENNQSMTEALREFGAVSCEGPVSLVALVGAKLTSWSMTGVFDALQGTPVLYWSQTDTVINLIINEESGVVVTKLLHDYVLGLNRSGL.

This sequence belongs to the aspartokinase family.

It catalyses the reaction L-aspartate + ATP = 4-phospho-L-aspartate + ADP. Its pathway is amino-acid biosynthesis; L-lysine biosynthesis via DAP pathway; (S)-tetrahydrodipicolinate from L-aspartate: step 1/4. It participates in amino-acid biosynthesis; L-methionine biosynthesis via de novo pathway; L-homoserine from L-aspartate: step 1/3. It functions in the pathway amino-acid biosynthesis; L-threonine biosynthesis; L-threonine from L-aspartate: step 1/5. The polypeptide is Aspartokinase (lysC) (Chlamydia muridarum (strain MoPn / Nigg)).